Here is a 352-residue protein sequence, read N- to C-terminus: DNA ADP-ribosyl glycohydrolase (352 aa).

In terms of domain architecture, Macro spans 1–155; sequence MITYGSGDLL…IYPPSGGSRA (155 aa). ADP-D-ribose is bound by residues 8-9, 20-22, 31-34, and threonine 79; these read DL, TVN, and IALQ. Lysine 80 functions as the Nucleophile in the catalytic mechanism. 117–121 is a binding site for ADP-D-ribose; the sequence is GVGNG. The interval 164-352 is interaction with DarT; sequence MTWGRAVILE…VALDRILMTA (189 aa).

Belongs to the DarG ADP-ribosyl glycohydrolase family. In terms of assembly, interacts (via C-terminus) with cognate toxin DarT; this heterodimeric complex neutralizes the toxic effect of DarT by preventing ssDNA binding to DarT and consequently inactivating the toxin by direct protein-protein interactions.

It catalyses the reaction an N-(ADP-alpha-D-ribosyl)-thymidine in DNA + H2O = a thymidine in DNA + ADP-D-ribose. Its function is as follows. Antitoxin component of the hybrid type II/IV toxin-antitoxin (TA) system DarTG, which plays a crucial role in controlling bacterial growth and bacteriophage infection. De-ADP-ribosylates DNA (probably) modified on thymidine by its cognate toxin DarT, which neutralizes the activity of cognate toxin DarT. The polypeptide is DNA ADP-ribosyl glycohydrolase (Mycobacterium bovis (strain BCG / Pasteur 1173P2)).